A 145-amino-acid chain; its full sequence is Transcription antitermination protein NusB (145 aa).

The protein belongs to the NusB family.

Involved in transcription antitermination. Required for transcription of ribosomal RNA (rRNA) genes. Binds specifically to the boxA antiterminator sequence of the ribosomal RNA (rrn) operons. The polypeptide is Transcription antitermination protein NusB (Geotalea daltonii (strain DSM 22248 / JCM 15807 / FRC-32) (Geobacter daltonii)).